The primary structure comprises 410 residues: Tegument protein VP16 homolog (410 aa).

Residues 388 to 410 (PPSPSEILPGDPPRPPTCGFLTR) form a disordered region.

Belongs to the herpesviridae tegument protein VP16 protein family. Associates with the VP16-induced complex; binding to host HCFC1 activates VP16 for association with the octamer motif-binding host protein POU2F1, to form a multiprotein-DNA complex responsible for activating transcription of the viral immediate early genes.

Its subcellular location is the virion tegument. The protein resides in the host nucleus. Its function is as follows. Transcriptional activator of immediate-early (IE) gene products (alpha genes). Acts as a key activator of lytic infection by initiating the lytic program through the assembly of the transcriptional regulatory VP16-induced complex composed of VP16 and two cellular factors, HCFC1 and POU2F 1. VP16-induced complex represents a regulatory switch: when it is on, it promotes IE-gene expression and thus lytic infection, and when it is off, it limits IE-gene transcription favoring latent infection. In terms of biological role, may play a role in the aggregation of tegument proteins around nucleocapsids during virus morphogenesis. The chain is Tegument protein VP16 homolog from Varicella-zoster virus (strain Oka vaccine) (HHV-3).